Consider the following 357-residue polypeptide: Elongation factor Ts (357 aa).

The involved in Mg(2+) ion dislocation from EF-Tu stretch occupies residues 82–85; that stretch reads TDFV.

This sequence belongs to the EF-Ts family.

The protein localises to the cytoplasm. Associates with the EF-Tu.GDP complex and induces the exchange of GDP to GTP. It remains bound to the aminoacyl-tRNA.EF-Tu.GTP complex up to the GTP hydrolysis stage on the ribosome. The chain is Elongation factor Ts from Campylobacter jejuni subsp. jejuni serotype O:6 (strain 81116 / NCTC 11828).